Here is a 396-residue protein sequence, read N- to C-terminus: Putative cyclin-B3-1 (396 aa).

The segment at 1–98 (MLRDGNKQSK…KVLDVTAKPK (98 aa)) is disordered. Residues 21-32 (KTTVKTSLQNRS) are compositionally biased toward polar residues. Low complexity predominate over residues 39 to 57 (VGRSKSRSISSIPSSAVAS). The segment covering 76 to 85 (GESSSSGNKD) has biased composition (polar residues).

Belongs to the cyclin family. Cyclin AB subfamily.

This is Putative cyclin-B3-1 (CYCB3-1) from Arabidopsis thaliana (Mouse-ear cress).